The following is a 379-amino-acid chain: Succinyl-diaminopimelate desuccinylase (379 aa).

His-70 lines the Zn(2+) pocket. Asp-72 is a catalytic residue. Position 103 (Asp-103) interacts with Zn(2+). Glu-137 functions as the Proton acceptor in the catalytic mechanism. Residues Glu-138, Glu-166, and His-352 each contribute to the Zn(2+) site.

This sequence belongs to the peptidase M20A family. DapE subfamily. In terms of assembly, homodimer. Zn(2+) serves as cofactor. It depends on Co(2+) as a cofactor.

It carries out the reaction N-succinyl-(2S,6S)-2,6-diaminopimelate + H2O = (2S,6S)-2,6-diaminopimelate + succinate. It functions in the pathway amino-acid biosynthesis; L-lysine biosynthesis via DAP pathway; LL-2,6-diaminopimelate from (S)-tetrahydrodipicolinate (succinylase route): step 3/3. Catalyzes the hydrolysis of N-succinyl-L,L-diaminopimelic acid (SDAP), forming succinate and LL-2,6-diaminopimelate (DAP), an intermediate involved in the bacterial biosynthesis of lysine and meso-diaminopimelic acid, an essential component of bacterial cell walls. In Shewanella sp. (strain W3-18-1), this protein is Succinyl-diaminopimelate desuccinylase.